The following is a 623-amino-acid chain: ATP-dependent lipid A-core flippase (623 aa).

5 helical membrane-spanning segments follow: residues L66–I86, V103–F123, L190–I210, L290–L310, and A317–I337. Residues V67–K349 enclose the ABC transmembrane type-1 domain. Positions V382–M618 constitute an ABC transporter domain. G416–T423 provides a ligand contact to ATP.

The protein belongs to the ABC transporter superfamily. Lipid exporter (TC 3.A.1.106) family. In terms of assembly, homodimer.

It is found in the cell inner membrane. It carries out the reaction ATP + H2O + lipid A-core oligosaccharideSide 1 = ADP + phosphate + lipid A-core oligosaccharideSide 2.. Functionally, involved in lipopolysaccharide (LPS) biosynthesis. Translocates lipid A-core from the inner to the outer leaflet of the inner membrane. Transmembrane domains (TMD) form a pore in the inner membrane and the ATP-binding domain (NBD) is responsible for energy generation. The protein is ATP-dependent lipid A-core flippase of Bordetella pertussis (strain Tohama I / ATCC BAA-589 / NCTC 13251).